Here is a 242-residue protein sequence, read N- to C-terminus: 7-cyano-7-deazaguanine synthase (242 aa).

13–23 contacts ATP; the sequence is FSGGQDSSVCL. Zn(2+) contacts are provided by C201, C216, C219, and C222.

The protein belongs to the QueC family. It depends on Zn(2+) as a cofactor.

It catalyses the reaction 7-carboxy-7-deazaguanine + NH4(+) + ATP = 7-cyano-7-deazaguanine + ADP + phosphate + H2O + H(+). The protein operates within purine metabolism; 7-cyano-7-deazaguanine biosynthesis. In terms of biological role, catalyzes the ATP-dependent conversion of 7-carboxy-7-deazaguanine (CDG) to 7-cyano-7-deazaguanine (preQ(0)). This chain is 7-cyano-7-deazaguanine synthase, found in Caulobacter vibrioides (strain ATCC 19089 / CIP 103742 / CB 15) (Caulobacter crescentus).